The primary structure comprises 544 residues: CTP synthase (544 aa).

An amidoligase domain region spans residues 1–266 (MTKFIFVTGG…DDLICERFGL (266 aa)). Residue S13 participates in CTP binding. S13 serves as a coordination point for UTP. ATP is bound by residues 14-19 (SLGKGI) and D71. 2 residues coordinate Mg(2+): D71 and E140. CTP is bound by residues 147 to 149 (DIE), 187 to 192 (KTKPTQ), and K223. UTP contacts are provided by residues 187–192 (KTKPTQ) and K223. Positions 291 to 543 (TVAMVGKYVE…VKAAKNYSEA (253 aa)) constitute a Glutamine amidotransferase type-1 domain. G354 contacts L-glutamine. C381 serves as the catalytic Nucleophile; for glutamine hydrolysis. L-glutamine is bound by residues 382–385 (LGMQ), E404, and R471. Residues H516 and E518 contribute to the active site.

This sequence belongs to the CTP synthase family. Homotetramer.

The enzyme catalyses UTP + L-glutamine + ATP + H2O = CTP + L-glutamate + ADP + phosphate + 2 H(+). It carries out the reaction L-glutamine + H2O = L-glutamate + NH4(+). It catalyses the reaction UTP + NH4(+) + ATP = CTP + ADP + phosphate + 2 H(+). It participates in pyrimidine metabolism; CTP biosynthesis via de novo pathway; CTP from UDP: step 2/2. Allosterically activated by GTP, when glutamine is the substrate; GTP has no effect on the reaction when ammonia is the substrate. The allosteric effector GTP functions by stabilizing the protein conformation that binds the tetrahedral intermediate(s) formed during glutamine hydrolysis. Inhibited by the product CTP, via allosteric rather than competitive inhibition. Functionally, catalyzes the ATP-dependent amination of UTP to CTP with either L-glutamine or ammonia as the source of nitrogen. Regulates intracellular CTP levels through interactions with the four ribonucleotide triphosphates. The polypeptide is CTP synthase (Psychrobacter cryohalolentis (strain ATCC BAA-1226 / DSM 17306 / VKM B-2378 / K5)).